A 443-amino-acid chain; its full sequence is Putative cytochrome bd menaquinol oxidase subunit I (443 aa).

9 helical membrane-spanning segments follow: residues 19–39 (IIFA…ELIY), 60–80 (VLLG…ALLW), 93–113 (LPFQ…SIYV), 125–145 (IVAV…ITNV), 176–196 (FFIT…FIVA), 219–239 (ALLL…LNGH), 322–342 (LFNA…IGVV), 357–377 (LIIF…GWIF), and 405–425 (VLFL…VYVL). Position 182 (His-182) interacts with heme b.

The protein belongs to the cytochrome ubiquinol oxidase subunit 1 family. It depends on heme b as a cofactor.

Its subcellular location is the cell membrane. Functionally, may have a role in sporulation. Can compensate for the loss of cytochrome aa3. In Bacillus subtilis (strain 168), this protein is Putative cytochrome bd menaquinol oxidase subunit I (ythA).